Reading from the N-terminus, the 432-residue chain is Glutamate-1-semialdehyde 2,1-aminomutase (432 aa).

The residue at position 265 (Lys-265) is an N6-(pyridoxal phosphate)lysine.

This sequence belongs to the class-III pyridoxal-phosphate-dependent aminotransferase family. HemL subfamily. As to quaternary structure, homodimer. The cofactor is pyridoxal 5'-phosphate.

The protein resides in the cytoplasm. The catalysed reaction is (S)-4-amino-5-oxopentanoate = 5-aminolevulinate. It functions in the pathway porphyrin-containing compound metabolism; protoporphyrin-IX biosynthesis; 5-aminolevulinate from L-glutamyl-tRNA(Glu): step 2/2. The sequence is that of Glutamate-1-semialdehyde 2,1-aminomutase from Histophilus somni (strain 129Pt) (Haemophilus somnus).